The chain runs to 686 residues: Protein MxiA (686 aa).

A run of 6 helical transmembrane segments spans residues Leu-28–Phe-52, Phe-105–Ile-129, Ala-197–Met-216, Ile-232–Val-256, Ile-274–Gly-292, and Phe-299–Tyr-315.

This sequence belongs to the FHIPEP (flagella/HR/invasion proteins export pore) family.

It is found in the cell inner membrane. Necessary for the secretion of IPA invasins. This Shigella flexneri protein is Protein MxiA (mxiA).